Consider the following 443-residue polypeptide: MESLFKRPFMVYGLAAGLRTVLLFYGAWQDAHSAVKYTDIDYMVFTDASRYVSQGDSPYARDTYRYTPLLAWMLLPTTWAIPGFFSFGKALFALSDVVAGWLVAKSLTLTHGMSAERALKYASFWLLNPMVANISTRGSSEGLLGVLVVALLWAVLNRRIYLGGVLLGIGVHFKIYPFIYGMSILWWLDEKEFTTNKAQSESREVKPKFKDTPVGIFISQILSFITPCRIRLTLISLLTFVALNAAMYLHYGTPFLQHTYLHHLTRIDHRHNFSPYSTLLYLTAASSAGAVGHDAGGPSGSFESLAFIPQLLISVVVIPLVLGKKDLPGTMLAQTFAFVTFNKVCTSQYFLWYLIFLPFYLPTSSLLRNPRLGIAVAALWILGQALWLQQGYLLEFLGISSFLPGLFLASLGFFAVNAWILGVIVADVGGLNLESGNEKRRVK.

Helical transmembrane passes span 8–28 (PFMVYGLAAGLRTVLLFYGAW), 68–88 (PLLAWMLLPTTWAIPGFFSFG), 90–110 (ALFALSDVVAGWLVAKSLTLT), 136–156 (TRGSSEGLLGVLVVALLWAVL), 160–180 (IYLGGVLLGIGVHFKIYPFIY), 232–252 (LTLISLLTFVALNAAMYLHYG), 273–291 (FSPYSTLLYLTAASSAGAV), 302–322 (FESLAFIPQLLISVVVIPLVL), 347–367 (SQYFLWYLIFLPFYLPTSSLL), 374–394 (IAVAALWILGQALWLQQGYLL), and 406–426 (LFLASLGFFAVNAWILGVIVA).

Belongs to the PIGM family.

The protein localises to the endoplasmic reticulum membrane. The protein operates within glycolipid biosynthesis; glycosylphosphatidylinositol-anchor biosynthesis. Functionally, mannosyltransferase involved in glycosylphosphatidylinositol-anchor biosynthesis. Transfers the first alpha-1,4-mannose to GlcN-acyl-PI during GPI precursor assembly. Required for cell wall integrity. This chain is GPI mannosyltransferase 1 (gpi14), found in Emericella nidulans (strain FGSC A4 / ATCC 38163 / CBS 112.46 / NRRL 194 / M139) (Aspergillus nidulans).